Reading from the N-terminus, the 166-residue chain is Endoribonuclease YbeY (166 aa).

Zn(2+) contacts are provided by His-132, His-136, and His-142.

It belongs to the endoribonuclease YbeY family. Zn(2+) is required as a cofactor.

Its subcellular location is the cytoplasm. Single strand-specific metallo-endoribonuclease involved in late-stage 70S ribosome quality control and in maturation of the 3' terminus of the 16S rRNA. The polypeptide is Endoribonuclease YbeY (Clostridium botulinum (strain Loch Maree / Type A3)).